Reading from the N-terminus, the 256-residue chain is Rano class II histocompatibility antigen, B alpha chain (256 aa).

The first 23 residues, 1–23 (MPLSRALILGVLALTTMLSPCGG), serve as a signal peptide directing secretion. Residues 24-111 (QDDIEADHVG…KRSNSTPAVN (88 aa)) are alpha-1. The Extracellular segment spans residues 24-218 (QDDIEADHVG…IPAPMSELTE (195 aa)). Residues 108–206 (PAVNEVPEAT…LDEPVLRHWE (99 aa)) form the Ig-like C1-type domain. Positions 112–205 (EVPEATVFSK…SLDEPVLRHW (94 aa)) are alpha-2. Cys134 and Cys190 form a disulfide bridge. N-linked (GlcNAc...) asparagine glycosylation is present at Asn145. Residues 206–218 (EPEIPAPMSELTE) are connecting peptide. The helical transmembrane segment at 219 to 244 (TVVCALGLSVGLVGIVVGTIFIIQGL) threads the bilayer. The Cytoplasmic segment spans residues 245–256 (RSVAPSRHPGPL).

This sequence belongs to the MHC class II family.

Its subcellular location is the membrane. The polypeptide is Rano class II histocompatibility antigen, B alpha chain (RT1-Ba) (Rattus norvegicus (Rat)).